Reading from the N-terminus, the 432-residue chain is Adenylosuccinate synthetase (432 aa).

GTP contacts are provided by residues 13–19 and 41–43; these read GDEGKGK and GHT. Asp14 (proton acceptor) is an active-site residue. Mg(2+) contacts are provided by Asp14 and Gly41. Residues 14-17, 39-42, Thr130, Arg144, Gln225, Thr240, and Arg304 each bind IMP; these read DEGK and NAGH. Catalysis depends on His42, which acts as the Proton donor. 300–306 lines the substrate pocket; it reads AVTGRPR. GTP is bound by residues Arg306, 332-334, and 415-417; these read KLD and STG.

It belongs to the adenylosuccinate synthetase family. As to quaternary structure, homodimer. Requires Mg(2+) as cofactor.

Its subcellular location is the cytoplasm. It catalyses the reaction IMP + L-aspartate + GTP = N(6)-(1,2-dicarboxyethyl)-AMP + GDP + phosphate + 2 H(+). It functions in the pathway purine metabolism; AMP biosynthesis via de novo pathway; AMP from IMP: step 1/2. Plays an important role in the de novo pathway of purine nucleotide biosynthesis. Catalyzes the first committed step in the biosynthesis of AMP from IMP. The protein is Adenylosuccinate synthetase of Haemophilus ducreyi (strain 35000HP / ATCC 700724).